The primary structure comprises 326 residues: MPPSISAFQAAYIGIEVLIALVSVPGNVLVIWAVKVNQALRDATFCFIVSLAVADVAVGALVIPLAILINIGPQTYFHTCLMVACPVLILTQSSILALLAIAVDRYLRVKIPLRYKMVVTPRRAAVAIAGCWILSFVVGLTPMFGWNNLSAVERAWAANGSMGEPVIKCEFEKVISMEYMVYFNFFVWVLPPLLLMVLIYLEVFYLIRKQLNKKVSASSGDPQKYYGKELKIAKSLALILFLFALSWLPLHILNCITLFCPSCHKPSILTYIAIFLTHGNSAMNPIVYAFRIQKFRVTFLKIWNDHFRCQPAPPIDEDLPEERPDD.

Residues 1–10 (MPPSISAFQA) lie on the Extracellular side of the membrane. A helical membrane pass occupies residues 11–33 (AYIGIEVLIALVSVPGNVLVIWA). Topologically, residues 34–46 (VKVNQALRDATFC) are cytoplasmic. Residues 47–69 (FIVSLAVADVAVGALVIPLAILI) form a helical membrane-spanning segment. At 70-80 (NIGPQTYFHTC) the chain is on the extracellular side. Cysteine 80 and cysteine 169 form a disulfide bridge. Residues 81–102 (LMVACPVLILTQSSILALLAIA) form a helical membrane-spanning segment. Over 103 to 123 (VDRYLRVKIPLRYKMVVTPRR) the chain is Cytoplasmic. The helical transmembrane segment at 124–146 (AAVAIAGCWILSFVVGLTPMFGW) threads the bilayer. Topologically, residues 147-176 (NNLSAVERAWAANGSMGEPVIKCEFEKVIS) are extracellular. N-linked (GlcNAc...) asparagine glycosylation is present at asparagine 159. A helical membrane pass occupies residues 177 to 201 (MEYMVYFNFFVWVLPPLLLMVLIYL). The Cytoplasmic portion of the chain corresponds to 202–235 (EVFYLIRKQLNKKVSASSGDPQKYYGKELKIAKS). The chain crosses the membrane as a helical span at residues 236 to 259 (LALILFLFALSWLPLHILNCITLF). The Extracellular portion of the chain corresponds to 260–267 (CPSCHKPS). Residues 268-292 (ILTYIAIFLTHGNSAMNPIVYAFRI) form a helical membrane-spanning segment. Over 293–326 (QKFRVTFLKIWNDHFRCQPAPPIDEDLPEERPDD) the chain is Cytoplasmic. Cysteine 309 is lipidated: S-palmitoyl cysteine.

It belongs to the G-protein coupled receptor 1 family.

The protein localises to the cell membrane. Receptor for adenosine. The activity of this receptor is mediated by G proteins which inhibit adenylyl cyclase. This chain is Adenosine receptor A1 (ADORA1), found in Homo sapiens (Human).